Here is a 142-residue protein sequence, read N- to C-terminus: Large ribosomal subunit protein uL13 (142 aa).

It belongs to the universal ribosomal protein uL13 family. In terms of assembly, part of the 50S ribosomal subunit.

This protein is one of the early assembly proteins of the 50S ribosomal subunit, although it is not seen to bind rRNA by itself. It is important during the early stages of 50S assembly. This chain is Large ribosomal subunit protein uL13, found in Vibrio parahaemolyticus serotype O3:K6 (strain RIMD 2210633).